The chain runs to 156 residues: UPF0587 protein (156 aa).

Zn(2+) contacts are provided by Cys32, Cys35, Cys64, and Cys67.

Belongs to the UPF0587 family.

This is UPF0587 protein from Dictyostelium discoideum (Social amoeba).